We begin with the raw amino-acid sequence, 244 residues long: LexA repressor (244 aa).

Positions 1 to 24 are disordered; sequence MSDSSDTTVDGASDGASDGASGAD. Residues 10 to 24 show a composition bias toward low complexity; it reads DGASDGASDGASGAD. Residues 58–78 constitute a DNA-binding region (H-T-H motif); it reads IREIGDAVGLTSTSSVAHQLR. Active-site for autocatalytic cleavage activity residues include serine 168 and lysine 205.

Belongs to the peptidase S24 family. Homodimer.

The enzyme catalyses Hydrolysis of Ala-|-Gly bond in repressor LexA.. In terms of biological role, represses a number of genes involved in the response to DNA damage (SOS response), including recA and lexA. In the presence of single-stranded DNA, RecA interacts with LexA causing an autocatalytic cleavage which disrupts the DNA-binding part of LexA, leading to derepression of the SOS regulon and eventually DNA repair. This Mycobacterium marinum (strain ATCC BAA-535 / M) protein is LexA repressor.